A 597-amino-acid polypeptide reads, in one-letter code: Myrcene synthase, chloroplastic (597 aa).

A chloroplast-targeting transit peptide spans 1–56 (MALKLLTSLPMYNFSRVPVSSKDPILLVTSRTRNGYLARPVQCMVANKVSTSPDIL). (2E)-geranyl diphosphate is bound by residues arginine 310, aspartate 347, aspartate 351, arginine 488, and aspartate 491. Mg(2+) contacts are provided by aspartate 347 and aspartate 351. Residues 347-351 (DDVYD) carry the DDXXD motif motif. Mg(2+)-binding residues include aspartate 491, threonine 495, and glutamate 499.

The protein belongs to the terpene synthase family. Tpsb subfamily. Requires Mg(2+) as cofactor. It depends on Mn(2+) as a cofactor.

It localises to the plastid. The protein localises to the chloroplast. The enzyme catalyses (2E)-geranyl diphosphate = beta-myrcene + diphosphate. Involved in monoterpene (C10) biosynthesis. The major product is myrcene followed by minor amounts (1.2%) of the cyclic monoterpene limonene. This Quercus ilex (Holly oak) protein is Myrcene synthase, chloroplastic.